Consider the following 425-residue polypeptide: MLDIKDIRLNTEEYKRRLGTRGVKPEEIDELVAEDKKRRELLVETENLKKERNEVSEAIAQAKRNKEDASEQIQAMRKVGTKIKELDEKLAKVEENVKSMAAHLPNLPNPTIPVGPDEDSNVELYKVGTPRKFDFEPKAHWDIGEDLGILDFDRAAKVSGARFVFYKGLGAKLERAVYNFMLDEHAKEGYTEVIPPYIVKSKSMYGTGQFPKFKDQVYQVNGEDMTLIPTAEVPLTNYYREEVIPTEDLPVYFTALSPSFRSEAGSAGRDTRGLIRMHQFNKVEMVKYTKPEDSYNELEKMTKNAGNIMEKLGLPYHVITLSTGDMGFSAAMTHDLEVWMPAQDTYREISSCSNCEDFQARRARIQYRDENGKLQYVHTLNGSGLAVGRTVAAILENYQNEDGSVTIPEALRPYMQGLEVIKKEK.

230–232 contacts L-serine; the sequence is TAE. Position 261 to 263 (261 to 263) interacts with ATP; that stretch reads RSE. E284 contributes to the L-serine binding site. 348-351 is a binding site for ATP; it reads EISS. An L-serine-binding site is contributed by S383.

It belongs to the class-II aminoacyl-tRNA synthetase family. Type-1 seryl-tRNA synthetase subfamily. Homodimer. The tRNA molecule binds across the dimer.

Its subcellular location is the cytoplasm. It catalyses the reaction tRNA(Ser) + L-serine + ATP = L-seryl-tRNA(Ser) + AMP + diphosphate + H(+). The enzyme catalyses tRNA(Sec) + L-serine + ATP = L-seryl-tRNA(Sec) + AMP + diphosphate + H(+). It functions in the pathway aminoacyl-tRNA biosynthesis; selenocysteinyl-tRNA(Sec) biosynthesis; L-seryl-tRNA(Sec) from L-serine and tRNA(Sec): step 1/1. Its function is as follows. Catalyzes the attachment of serine to tRNA(Ser). Is also able to aminoacylate tRNA(Sec) with serine, to form the misacylated tRNA L-seryl-tRNA(Sec), which will be further converted into selenocysteinyl-tRNA(Sec). This Ligilactobacillus salivarius (strain UCC118) (Lactobacillus salivarius) protein is Serine--tRNA ligase.